The following is a 109-amino-acid chain: MQAIHNDKSLLSPFSELNTDNRTKREESGNAFKEQKGGEFSKLLKQSINELNNTQEQSDKALADMATGQIKDLHQAAIAIGKAETSMKLMLEVRNKAISAYKELLRTQI.

Residues 1-38 are disordered; that stretch reads MQAIHNDKSLLSPFSELNTDNRTKREESGNAFKEQKGG. Residues 19–38 are compositionally biased toward basic and acidic residues; the sequence is TDNRTKREESGNAFKEQKGG.

It belongs to the FliE family.

The protein localises to the bacterial flagellum basal body. The polypeptide is Flagellar hook-basal body complex protein FliE (Helicobacter pylori (strain G27)).